Reading from the N-terminus, the 599-residue chain is Aspartate--tRNA(Asp/Asn) ligase (599 aa).

Glu172 is an L-aspartate binding site. The aspartate stretch occupies residues 196-199 (QLFK). Arg218 lines the L-aspartate pocket. ATP-binding positions include 218–220 (RDE) and Gln227. Position 451 (His451) interacts with L-aspartate. Glu485 is an ATP binding site. Arg492 is an L-aspartate binding site. 537 to 540 (GLDR) contributes to the ATP binding site.

This sequence belongs to the class-II aminoacyl-tRNA synthetase family. Type 1 subfamily. Homodimer.

It is found in the cytoplasm. The enzyme catalyses tRNA(Asx) + L-aspartate + ATP = L-aspartyl-tRNA(Asx) + AMP + diphosphate. Aspartyl-tRNA synthetase with relaxed tRNA specificity since it is able to aspartylate not only its cognate tRNA(Asp) but also tRNA(Asn). Reaction proceeds in two steps: L-aspartate is first activated by ATP to form Asp-AMP and then transferred to the acceptor end of tRNA(Asp/Asn). This chain is Aspartate--tRNA(Asp/Asn) ligase, found in Dechloromonas aromatica (strain RCB).